Reading from the N-terminus, the 299-residue chain is Tyrosine recombinase XerC (299 aa).

The 85-residue stretch at 1–85 (MERQLEAYCA…AVRGLYRYLN (85 aa)) folds into the Core-binding (CB) domain. The Tyr recombinase domain occupies 106-285 (RLPKTLDTDR…DFQHLAAVYD (180 aa)). Active-site residues include R146, K170, H237, R240, and H263. Y272 (O-(3'-phospho-DNA)-tyrosine intermediate) is an active-site residue.

It belongs to the 'phage' integrase family. XerC subfamily. Forms a cyclic heterotetrameric complex composed of two molecules of XerC and two molecules of XerD.

The protein resides in the cytoplasm. Its function is as follows. Site-specific tyrosine recombinase, which acts by catalyzing the cutting and rejoining of the recombining DNA molecules. The XerC-XerD complex is essential to convert dimers of the bacterial chromosome into monomers to permit their segregation at cell division. It also contributes to the segregational stability of plasmids. The protein is Tyrosine recombinase XerC of Pseudomonas entomophila (strain L48).